A 148-amino-acid polypeptide reads, in one-letter code: MKIVIQRVMKASLTVNGKSRASINQGLVLLVGIGPDDVQEDLTYAVRKITNMRIFSDEEGKMNLSVRDIKGEVLSVSQFTLFANTKKGNRPAFTGAAQADLASYLYDQFNQELAQFVPVQTGIFGSDMQVSLTNDGPVTILLDTKNKE.

The short motif at 136 to 137 (GP) is the Gly-cisPro motif, important for rejection of L-amino acids element.

This sequence belongs to the DTD family. Homodimer.

It is found in the cytoplasm. The catalysed reaction is glycyl-tRNA(Ala) + H2O = tRNA(Ala) + glycine + H(+). It catalyses the reaction a D-aminoacyl-tRNA + H2O = a tRNA + a D-alpha-amino acid + H(+). An aminoacyl-tRNA editing enzyme that deacylates mischarged D-aminoacyl-tRNAs. Also deacylates mischarged glycyl-tRNA(Ala), protecting cells against glycine mischarging by AlaRS. Acts via tRNA-based rather than protein-based catalysis; rejects L-amino acids rather than detecting D-amino acids in the active site. By recycling D-aminoacyl-tRNA to D-amino acids and free tRNA molecules, this enzyme counteracts the toxicity associated with the formation of D-aminoacyl-tRNA entities in vivo and helps enforce protein L-homochirality. This Streptococcus mutans serotype c (strain ATCC 700610 / UA159) protein is D-aminoacyl-tRNA deacylase.